Here is a 633-residue protein sequence, read N- to C-terminus: DNA mismatch repair protein MutL (633 aa).

Belongs to the DNA mismatch repair MutL/HexB family.

Its function is as follows. This protein is involved in the repair of mismatches in DNA. It is required for dam-dependent methyl-directed DNA mismatch repair. May act as a 'molecular matchmaker', a protein that promotes the formation of a stable complex between two or more DNA-binding proteins in an ATP-dependent manner without itself being part of a final effector complex. The protein is DNA mismatch repair protein MutL of Macrococcus caseolyticus (strain JCSC5402) (Macrococcoides caseolyticum).